Reading from the N-terminus, the 160-residue chain is Cytochrome b6-f complex subunit 4 (160 aa).

3 helical membrane-spanning segments follow: residues 36-56 (LLYI…GLAV), 95-115 (LLGV…PFLE), and 131-151 (TVFL…TLPI).

The protein belongs to the cytochrome b family. PetD subfamily. As to quaternary structure, the 4 large subunits of the cytochrome b6-f complex are cytochrome b6, subunit IV (17 kDa polypeptide, petD), cytochrome f and the Rieske protein, while the 4 small subunits are petG, petL, petM and petN. The complex functions as a dimer.

The protein resides in the plastid. The protein localises to the chloroplast thylakoid membrane. Component of the cytochrome b6-f complex, which mediates electron transfer between photosystem II (PSII) and photosystem I (PSI), cyclic electron flow around PSI, and state transitions. The protein is Cytochrome b6-f complex subunit 4 of Solanum bulbocastanum (Wild potato).